We begin with the raw amino-acid sequence, 199 residues long: Recombination protein RecR (199 aa).

The C4-type zinc-finger motif lies at 57 to 72 (CQSCRTFTEQSLCPIC). Residues 81–176 (GVICVVETPA…IISRIAHGVP (96 aa)) form the Toprim domain.

The protein belongs to the RecR family.

Functionally, may play a role in DNA repair. It seems to be involved in an RecBC-independent recombinational process of DNA repair. It may act with RecF and RecO. This chain is Recombination protein RecR, found in Shewanella denitrificans (strain OS217 / ATCC BAA-1090 / DSM 15013).